Consider the following 387-residue polypeptide: Phosphoglycerate kinase (387 aa).

Substrate-binding positions include 21–23 (DLN), R36, 59–62 (HLGR), R113, and R146. ATP contacts are provided by residues K197, E314, and 340–343 (GGDT).

The protein belongs to the phosphoglycerate kinase family. As to quaternary structure, monomer.

The protein resides in the cytoplasm. The catalysed reaction is (2R)-3-phosphoglycerate + ATP = (2R)-3-phospho-glyceroyl phosphate + ADP. The protein operates within carbohydrate degradation; glycolysis; pyruvate from D-glyceraldehyde 3-phosphate: step 2/5. This Tolumonas auensis (strain DSM 9187 / NBRC 110442 / TA 4) protein is Phosphoglycerate kinase.